A 1387-amino-acid chain; its full sequence is MKNYWNCSVSDSEMNLKKKQMQKNFKNTCDSVSETFVGSGIPSSTFGKNGDIYLDRTTQYYYKKNNCIWIKYFCNGYCCFKGCKGGFFCQKGDKGNNGNNGNNGEKGQKGLKGIKGDIGDKGSKGDIGEKGDIGDKGDFGDKGIDGNKGSKGDIGDTGSKGDKGDKGDKGSKGDIGDKGSKGDIGVKGSKGDNGDKGSKGDIGVKGSKGDKGNKGDKGDNGLSILSGLDIPSPDLGMDGDLYLDTITDELYKKINGEWIEITNLKGEKGEIGSKGTKGDDGNKGNKGIKGDKGTTGDKGDKGDVGNKGDAGDKGDAGKKGEKGEMGNKGDIGDKGNDGIKGDFGSKGYKGDKGSKGTKGNNGFKGDRGDKGDKGSKGDKGDNGIKGNKGSKGDKGDNGIKGEKGESGSSILFGMGLPDQNQGEDGDIYIDTLTGELYRKVNGLWVPEIDIKGDKGEKGDRGNVGDKGEKGDIGLKGDKGEKGEKGNVGDKGDIGTKGDKGNVGDKGDIGIKGEKGDIGTKGDIGNKGDKGDKGDIGNKGNIGNKGEKGDKGVKGDIGEKGEKGDKGVKGDKGEKGEKGEKGEKGEKGDKGNKGDKGNKGDKGDKSDKGDKGNKGDKGNKGDKGNKGDKGDNGDKGDKGDNGDKGNKGDKGDNGDKGDKGDNGDKGNKGDKGDNGDKGDNGDKGNKGDNGDKGNKGDKGDNGDKGNKGDKGDNGDKGNKGDKGDKGDNGDKGDNGDKGDNGDKGDKGESGSSCQIENNDGVTIMSVCTPGIASIQAYQYEITDISGLENPYDPSNISGLNFKLFDTVKGAFRTGNFTADNMTNVGINSTAMGYHTQATGSGSFSFGNNTNGIISSNGIGSFVMGITTSSGVIISEGDGSIASGYSTNSSTIEIQNNSLSSIIHGYSISGSSMRLMEGNIGSMIIGSSETGSIVQSGSGSIASLINVRATSGTISIGSMSYGSKIFGYSNNGTITISDNVHGSQISGIVTNNGQMTIGTLSHGSYLHGYADTSSTISIGTNSFGSECIGLAQNNGTINNGDLSFGCRISGWTLSGLLSTGSGSCGTILYGVAVNSGIINTSGRNFGCFVGGYCAYYGKITIGANSFGTICHGTADASGTILVGTNSTGNLVVGSSQGTISLGSTNFGSVILGYTENSGSIISDGNNRGIFMHGYSSSASLYTASGSCGTVLMGYGTSGSAINVSGLGSFTFGYCPSSGEITQVLANGSFAFGRNNTTVSENSFSLGYGARSYMPGSMAFSSFATSGNPLRAGSAQTIKVLTRNLNTEFVLADGNFPTLPYTGYGNIKAKIIGSSGTMSVLYFQVFFDGSTHTVTIPTTPAGGQIVYSNPVAVSPAPTFTPVATVPGFSVTIANPGTQTFVASFGIVNIS.

N-linked (GlcNAc...) asparagine; by host glycosylation is present at N6. 6 Collagen-like domains span residues 95 to 154 (GNNG…KGDI), 161 to 220 (GDKG…KGDN), 266 to 325 (GEKG…KGEM), 344 to 403 (GSKG…KGEK), 450 to 508 (IKGD…KGDI), and 512 to 751 (GEKG…SGSS). Disordered regions lie at residues 98 to 219 (GNNG…DKGD), 268 to 422 (KGEI…QNQG), and 454 to 753 (KGEK…SSCQ). Composition is skewed to basic and acidic residues over residues 114–181 (IKGD…KGSK), 189–199 (SKGDNGDKGSK), 207–219 (SKGD…DKGD), 268–340 (KGEI…DGIK), 364–382 (KGDR…KGDN), 390–405 (SKGD…EKGE), 454–535 (KGEK…KGDI), and 544–747 (KGEK…DKGE). 15 N-linked (GlcNAc...) asparagine; by host glycosylation sites follow: N794, N814, N819, N826, N846, N886, N894, N969, N1032, N1077, N1123, N1200, N1224, N1232, and N1233.

May be hydroxylated on lysine by the viral-encoded procollagen-lysine,2-oxoglutarate 5-dioxygenase.

The protein localises to the virion. May participate in the formation of a layer of cross-linked glycosylated fibrils at the viral surface thus giving it a hairy-like appearance. The chain is Collagen-like protein 6 from Acanthamoeba polyphaga mimivirus (APMV).